The following is a 469-amino-acid chain: MITEGAQAPRLLLPPLLLLLTLPATGSDPVLCFTRYEESSGKCKGLLGGGVSVKDCCLNTASAYQERSGGLCQPCRSPRWSLWSTWAPCSVTCSEGSQLRYRRCVGWNGQCSEKVALGTLEWQLQACEDQQCCPEMGGWSGWGPWEPCSVTCSKGTRTRRRACNHPAPKCGGHCPGQAQESEACDTQQSCPTHGAWAAWGPWTPCSGSCHSGTHEPKETRSRKCSAPEPSQKPPGKPCPGLAYEQRRCTGLPPCPVAGSWGPWGPVSPCPVTCGLGQTMEQRTCDHPVPQHGGPFCAGDATRTHICNTAVPCPVDGEWDSWGEWSTCVRRNMKSISCQEIPGQQSRWRTCKGRKFDGHRCAGQQQDIRHCYSIQHCPLKGSWSEWSTWGLCIPPCGPNPTRARQRLCTPLLPKYPPTVSMVEGQGEKNVTFWGRPLPRCEELQGQKLVVEEKRPCLHVPACKDPEEEKL.

Residues 1 to 27 form the signal peptide; sequence MITEGAQAPRLLLPPLLLLLTLPATGS. 7 consecutive TSP type-1 domains span residues 28 to 76, 77 to 134, 136 to 191, 193 to 255, 257 to 313, 315 to 377, and 379 to 462; these read DPVL…QPCR, SPRW…QCCP, MGGW…QSCP, HGAW…PPCP, AGSW…VPCP, DGEW…QHCP, and KGSW…PACK. Cystine bridges form between Cys-32–Cys-56, Cys-43–Cys-72, and Cys-57–Cys-75. C-linked (Man) tryptophan glycans are attached at residues Trp-83 and Trp-86. Intrachain disulfides connect Cys-89–Cys-127, Cys-93–Cys-133, Cys-104–Cys-111, Cys-132–Cys-170, Cys-148–Cys-184, Cys-152–Cys-190, and Cys-163–Cys-174. Trp-139, Trp-142, and Trp-145 each carry a C-linked (Man) tryptophan glycan. Thr-151 is a glycosylation site (O-linked (Fuc...) threonine). Trp-196, Trp-199, and Trp-202 each carry a C-linked (Man) tryptophan glycan. 3 disulfides stabilise this stretch: Cys-205–Cys-248, Cys-209–Cys-254, and Cys-224–Cys-238. Residue Ser-208 is glycosylated (O-linked (Fuc...) serine). A disordered region spans residues 218–238; that stretch reads ETRSRKCSAPEPSQKPPGKPC. Trp-260 and Trp-263 each carry a C-linked (Man) tryptophan glycan. Disulfide bonds link Cys-269/Cys-306, Cys-273/Cys-312, and Cys-284/Cys-296. The O-linked (Fuc...) threonine glycan is linked to Thr-272. Residues Trp-321 and Trp-324 are each glycosylated (C-linked (Man) tryptophan). Intrachain disulfides connect Cys-327/Cys-370, Cys-337/Cys-376, and Cys-350/Cys-360. The interaction with Complement C3 beta chain stretch occupies residues 351–359; that stretch reads KGRKFDGHR. Residues Trp-382, Trp-385, and Trp-388 are each glycosylated (C-linked (Man) tryptophan). Intrachain disulfides connect Cys-391–Cys-455, Cys-395–Cys-461, and Cys-407–Cys-439. Asn-428 is a glycosylation site (N-linked (GlcNAc...) asparagine).

As to quaternary structure, in plasma, properdin exists as dimers, trimers or tetramers in the relative proportions of 26:54:20. Interacts with the pro-C3-convertase enzyme complex (C3b-Bb) comprised of Complement C3 beta chain (C3b) and the Complement factor B Bb fragment (Bb), where it binds (via its TSP type-1 5 domain) with C3b and Bb. This interaction stabilizes the complex and allows it to become the active C3-convertase enzyme complex (C3b-Bb-FP). Interacts with C3b. Interacts with CFB.

Its subcellular location is the secreted. Its function is as follows. A positive regulator of the alternate pathway of complement. It binds to and stabilizes the C3- and C5-convertase enzyme complexes. Inhibits CFI-CFH mediated degradation of Inhibits CFI-CFH mediated degradation of Complement C3 beta chain (C3b). This Pongo abelii (Sumatran orangutan) protein is Properdin (CFP).